The chain runs to 316 residues: Olfactory receptor 10H4 (316 aa).

The Extracellular segment spans residues 1–26 (MPSQNYSIISEFNLFGFSAFPQHLLP). Asn-5 carries N-linked (GlcNAc...) asparagine glycosylation. A helical membrane pass occupies residues 27-47 (ILFLLYLLMFLFTLLGNLLIM). At 48 to 55 (ATIWIEHR) the chain is on the cytoplasmic side. The helical transmembrane segment at 56 to 76 (LHTPMYLFLCTLSVSEILFTV) threads the bilayer. Over 77-100 (AITPRMLADLLSTHHSITFVACAN) the chain is Extracellular. A disulfide bridge connects residues Cys-98 and Cys-190. A helical membrane pass occupies residues 101 to 121 (QMFFSFMFGFTHSFLLLVMGY). Residues 122–140 (DRYVAICHPLRYNVLMSPR) are Cytoplasmic-facing. A helical transmembrane segment spans residues 141–161 (DCAHLVACTWAGGSVMGMMVT). Over 162 to 198 (TIVFHLTFCGSNVIHHFFCHVLSLLKLACENKTSSVI) the chain is Extracellular. The chain crosses the membrane as a helical span at residues 199–219 (MGVMLVCVTALIGCLFLIILS). Topologically, residues 220-239 (YVFIVAAILRIPSAEGRHKT) are cytoplasmic. Residues 240–260 (FSTCVSHLTVVVTHYSFASFI) form a helical membrane-spanning segment. Residues 261-273 (YLKPKGLHSMYSD) are Extracellular-facing. The chain crosses the membrane as a helical span at residues 274–294 (ALMATTYTVFTPFLSPIIFSL). Residues 295–316 (RNKELKNAINKNFYRKFCPPSS) lie on the Cytoplasmic side of the membrane.

Belongs to the G-protein coupled receptor 1 family.

It localises to the cell membrane. In terms of biological role, odorant receptor. In Homo sapiens (Human), this protein is Olfactory receptor 10H4 (OR10H4).